The sequence spans 355 residues: Peptide chain release factor 1 (355 aa).

Gln231 is modified (N5-methylglutamine). Residues 280–291 are compositionally biased toward basic and acidic residues; that stretch reads SERLAKESEARK. Residues 280–303 form a disordered region; sequence SERLAKESEARKSQVGSGDRSERI.

It belongs to the prokaryotic/mitochondrial release factor family. In terms of processing, methylated by PrmC. Methylation increases the termination efficiency of RF1.

Its subcellular location is the cytoplasm. Its function is as follows. Peptide chain release factor 1 directs the termination of translation in response to the peptide chain termination codons UAG and UAA. The protein is Peptide chain release factor 1 of Campylobacter jejuni subsp. jejuni serotype O:6 (strain 81116 / NCTC 11828).